Consider the following 807-residue polypeptide: Microbial collagenase (807 aa).

The signal sequence occupies residues 1–27 (MSHLLPFPRRRLALACLLASISGASFG). His434 is a Zn(2+) binding site. Residue Glu435 is part of the active site. His438 lines the Zn(2+) pocket. The segment at 562-585 (EVTPENPDTDPDTPTEPSDGVTQL) is disordered.

It belongs to the peptidase M9A family. The cofactor is Zn(2+).

It localises to the secreted. The catalysed reaction is Digestion of native collagen in the triple helical region at Xaa-|-Gly bonds. With synthetic peptides, a preference is shown for Gly at P3 and P1', Pro and Ala at P2 and P2', and hydroxyproline, Ala or Arg at P3'.. Possesses gelatinolytic activity. The protein is Microbial collagenase of Vibrio vulnificus (strain CMCP6).